A 1245-amino-acid polypeptide reads, in one-letter code: ABC transporter B family member 13 (1245 aa).

The span at 1-14 (MDNTERSSNGNIQA) shows a compositional bias: polar residues. The segment at 1-20 (MDNTERSSNGNIQAETEAKE) is disordered. One can recognise an ABC transmembrane type-1 1 domain in the interval 47 to 336 (MLLGGLGACI…AAPSLSAIAK (290 aa)). A helical membrane pass occupies residues 48-68 (LLGGLGACIHGATLPLFFVFF). A glycan (N-linked (GlcNAc...) asparagine) is linked at N77. 5 helical membrane passes run 94–114 (LYLV…VSCW), 171–191 (HVLR…LSVW), 195–215 (LLTL…AIVM), 276–296 (LGVG…LWYA), and 314–334 (ILNV…LSAI). N-linked (GlcNAc...) asparagine glycans are attached at residues N351 and N391. One can recognise an ABC transporter 1 domain in the interval 372–607 (IEFQKVSFAY…GGDYATLVNC (236 aa)). 406–413 (GPSGSGKS) lines the ATP pocket. Over residues 610–629 (TEPQENSRSIMSETCKSQAG) the composition is skewed to polar residues. A disordered region spans residues 610–660 (TEPQENSRSIMSETCKSQAGSSSSRRVSSSRRTSSFRVDQEKTKNDDSKKD). Over residues 630-646 (SSSSRRVSSSRRTSSFR) the composition is skewed to low complexity. Residues 647–660 (VDQEKTKNDDSKKD) show a composition bias toward basic and acidic residues. An ABC transmembrane type-1 2 domain is found at 681–969 (ALLGSIGAVL…TLALTPDIVK (289 aa)). A run of 2 helical transmembrane segments spans residues 686–706 (IGAV…AYVL) and 725–745 (AIIF…QHYF). N-linked (GlcNAc...) asparagine glycosylation is present at N778. A run of 4 helical transmembrane segments spans residues 805–822 (IVQN…AFFY), 828–848 (AVVT…QLFL), 913–933 (LSQF…SVLI), and 947–967 (FMVL…TPDI). One can recognise an ABC transporter 2 domain in the interval 1004–1240 (IEFRNVSFVY…PNGFYKQLTS (237 aa)). N1008 carries N-linked (GlcNAc...) asparagine glycosylation. 1039–1046 (GPSGSGKS) contacts ATP. N1106 carries an N-linked (GlcNAc...) asparagine glycan.

This sequence belongs to the ABC transporter superfamily. ABCB family. Multidrug resistance exporter (TC 3.A.1.201) subfamily.

The protein resides in the membrane. This chain is ABC transporter B family member 13 (ABCB13), found in Arabidopsis thaliana (Mouse-ear cress).